A 247-amino-acid chain; its full sequence is UPF0246 protein LSL_1719 (247 aa).

It belongs to the UPF0246 family.

The polypeptide is UPF0246 protein LSL_1719 (Ligilactobacillus salivarius (strain UCC118) (Lactobacillus salivarius)).